A 330-amino-acid polypeptide reads, in one-letter code: Methionyl-tRNA formyltransferase (330 aa).

117 to 120 is a binding site for (6S)-5,6,7,8-tetrahydrofolate; it reads SLLP.

It belongs to the Fmt family.

The catalysed reaction is L-methionyl-tRNA(fMet) + (6R)-10-formyltetrahydrofolate = N-formyl-L-methionyl-tRNA(fMet) + (6S)-5,6,7,8-tetrahydrofolate + H(+). In terms of biological role, attaches a formyl group to the free amino group of methionyl-tRNA(fMet). The formyl group appears to play a dual role in the initiator identity of N-formylmethionyl-tRNA by promoting its recognition by IF2 and preventing the misappropriation of this tRNA by the elongation apparatus. This is Methionyl-tRNA formyltransferase from Verminephrobacter eiseniae (strain EF01-2).